The chain runs to 667 residues: UvrABC system protein B (667 aa).

The Helicase ATP-binding domain maps to 24–195; that stretch reads EGLRRGDRFQ…SSGGVFHLRG (172 aa). 37–44 lines the ATP pocket; sequence GVTGSGKT. A Beta-hairpin motif is present at residues 90–113; that stretch reads YYDYYQPEAYIPTKDLYIEKDADI. The 154-residue stretch at 428–581 folds into the Helicase C-terminal domain; sequence QVDDFIEEVQ…QLMYNIEHDI (154 aa). Residues 626 to 661 form the UVR domain; sequence EEYLALLEEEMWRASSELRYEDAAMLRDEMLRIKRE.

The protein belongs to the UvrB family. Forms a heterotetramer with UvrA during the search for lesions. Interacts with UvrC in an incision complex.

The protein resides in the cytoplasm. The UvrABC repair system catalyzes the recognition and processing of DNA lesions. A damage recognition complex composed of 2 UvrA and 2 UvrB subunits scans DNA for abnormalities. Upon binding of the UvrA(2)B(2) complex to a putative damaged site, the DNA wraps around one UvrB monomer. DNA wrap is dependent on ATP binding by UvrB and probably causes local melting of the DNA helix, facilitating insertion of UvrB beta-hairpin between the DNA strands. Then UvrB probes one DNA strand for the presence of a lesion. If a lesion is found the UvrA subunits dissociate and the UvrB-DNA preincision complex is formed. This complex is subsequently bound by UvrC and the second UvrB is released. If no lesion is found, the DNA wraps around the other UvrB subunit that will check the other stand for damage. This is UvrABC system protein B from Kosmotoga olearia (strain ATCC BAA-1733 / DSM 21960 / TBF 19.5.1).